The chain runs to 68 residues: Large ribosomal subunit protein bL35 (68 aa).

Belongs to the bacterial ribosomal protein bL35 family.

This is Large ribosomal subunit protein bL35 from Rickettsia typhi (strain ATCC VR-144 / Wilmington).